A 377-amino-acid polypeptide reads, in one-letter code: uncharacterized protein (377 aa).

The stretch at 309–375 (NIISVDKIKE…ISNLNKKLKK (67 aa)) forms a coiled coil.

Belongs to the mimivirus L5 family.

This is an uncharacterized protein from Acanthamoeba polyphaga (Amoeba).